We begin with the raw amino-acid sequence, 77 residues long: U8-lycotoxin-Ls1m (77 aa).

The first 20 residues, 1-20, serve as a signal peptide directing secretion; it reads MKLMIFTGLFLFAIVSLIEA. Positions 21–26 are excised as a propeptide; sequence QAENEK.

Belongs to the neurotoxin 19 (CSTX) family. 08 (U8-Lctx) subfamily. Contains 4 disulfide bonds. As to expression, expressed by the venom gland.

Its subcellular location is the secreted. This Lycosa singoriensis (Wolf spider) protein is U8-lycotoxin-Ls1m.